Reading from the N-terminus, the 545-residue chain is MKQEDNQGVCAHQDSEDKGMGSDFEDSEDREGDPEEREMGSNPHDTNKREGHPEPEMGSNPQDSRHREAVPDICTEGQLSEEEGVSVRGEEDDQSGVADMAMFPGLSESDSISRSLREDDDESAGENRLEEEEEQPAPPVLPWRRHLSLGSRHRGDKPAHRRFHRLHHPMAVDLGELDSLVASIMDAPTICPDCGESFSPGAAFLQHQRIHRLAEAAAAASLEPFGLAGECDAMVGMMGVGVAGGFGAGPPLARPPREKPFRCGECGKGFSRNTYLTNHLRLHTGERPNLCADCGKSFSWRADLLKHRRLHTGEKPYPCPECGEAFSLSSHLLSHRRAHAAASGAGAAALRPFACGECGKGFVRRSHLANHQRIHTGEKPHGCGECGKRFSWRSDLVKHQRVHTGEKPYMCSECGETFSVSSHLFTHKRTHSGERPYVCRECGKGFGRNSHLVNHLRVHTGEKPFRCGQCEKRFSDFSTLTQHQRTHTGEKPYTCIECGKSFIQSSHLIRHRRIHTGNKPHKCAGCGKGFRYKTHLAQHQKLHLC.

Residues 1–143 (MKQEDNQGVC…EQPAPPVLPW (143 aa)) form a disordered region. A Glycyl lysine isopeptide (Lys-Gly) (interchain with G-Cter in SUMO2) cross-link involves residue Lys2. Over residues 23–36 (DFEDSEDREGDPEE) the composition is skewed to acidic residues. Residues 45 to 55 (DTNKREGHPEP) are compositionally biased toward basic and acidic residues. 2 stretches are compositionally biased toward acidic residues: residues 79 to 94 (LSEE…EDDQ) and 118 to 135 (EDDD…EEEQ). 11 consecutive C2H2-type zinc fingers follow at residues 189-211 (TICP…QRIH), 261-283 (FRCG…LRLH), 289-311 (NLCA…RRLH), 317-339 (YPCP…RRAH), 353-375 (FACG…QRIH), 381-403 (HGCG…QRVH), 409-431 (YMCS…KRTH), 437-459 (YVCR…LRVH), 465-487 (FRCG…QRTH), 493-515 (YTCI…RRIH), and 521-543 (HKCA…QKLH).

The protein belongs to the krueppel C2H2-type zinc-finger protein family.

Its subcellular location is the nucleus. RNA-interacting protein with a high number of miRNA targets. Acts as a damage-induced regulator of muscle remodeling by mediating the interferon gamma response in muscle cells. This Homo sapiens (Human) protein is Zinc finger protein 697.